The following is a 204-amino-acid chain: MVDQLRERTTMADPLRERTELLLADYLGYCAREPGTPEPAPSTPEAAVLRSAAARLRQIHRSFFSAYLGYPGNRFELVALMADSVLSDSPGPTWGRVVTLVTFAGTLLERGPLVTARWKKWGFQPRLKEQEGDVARDCQRLVALLSSRLMGQHRAWLQAQGGWDGFCHFFRTPFPLAFWRKQLVQAFLSCLLTTAFIYLWTRLL.

Residues 86–105 (LSDSPGPTWGRVVTLVTFAG) carry the BH1 motif. The required for Ca(2+) binding stretch occupies residues 118–133 (WKKWGFQPRLKEQEGD). Residues Lys-119, Lys-120, and Lys-128 each participate in a glycyl lysine isopeptide (Lys-Gly) (interchain with G-Cter in ubiquitin) cross-link. The BH2 motif lies at 156 to 167 (WLQAQGGWDGFC). A helical membrane pass occupies residues 183-200 (LVQAFLSCLLTTAFIYLW).

This sequence belongs to the Bcl-2 family. In terms of assembly, interacts with BAX. Interacts with BCL2 and BCL2L1/BCLX. Interacts with APAF1. Interacts with ITPR1, ITPR2 and ITPR3; the interaction with ITPR1 is increased in the presence of AHCLY1. Interacts with AHCYL1. Interacts with HIP1R (via ENTH and I/LWEQ domains). Interacts with CASP9. Interacts with BCL2L11/BIM. Interacts with BIK. Interacts with UBQLN4. Interacts with NME2/NM23-H2. Interacts with PMAIP1/NOXA. Interacts with TPX2. Interacts with UBQLN1; in the cytoplasm. Interacts (via BH1 domain) with BECN1. The cofactor is Ca(2+). Monoubiquitinated by UBQLN1; results in stabilization of BCL2L10 protein abundance and in relocalization from mitochondria to cytoplasm. Widely expressed in adult tissues. Preferentially expressed in lung, liver and kidney.

It is found in the mitochondrion. Its subcellular location is the nucleus membrane. The protein resides in the endoplasmic reticulum. It localises to the cytoplasm. The protein localises to the cytoskeleton. It is found in the spindle. In terms of biological role, promotes cell survival by suppressing apoptosis induced by BAX but not BAK. Increases binding of AHCYL1/IRBIT to ITPR1. Reduces ITPR1-mediated calcium release from the endoplasmic reticulum cooperatively with AHCYL1/IRBIT under normal cellular conditions. Under apoptotic stress conditions, dissociates from ITPR1 and is displaced from mitochondria-associated endoplasmic reticulum membranes, leading to increased Ca(2+) transfer to mitochondria which promotes apoptosis. Required for the correct formation of the microtubule organizing center during oocyte cell division, potentially via regulation of protein abundance and localization of other microtubule organizing center components such as AURKA and TPX2. The polypeptide is Bcl-2-like protein 10 (Homo sapiens (Human)).